The sequence spans 140 residues: Small ribosomal subunit protein bS6 (140 aa).

The segment at 96-140 (VTGQSEMLKAEENRSERRERRDRPEHEGADSADSDDSDNSDNADE) is disordered. Residues 103 to 124 (LKAEENRSERRERRDRPEHEGA) show a composition bias toward basic and acidic residues. The segment covering 125–140 (DSADSDDSDNSDNADE) has biased composition (acidic residues).

Belongs to the bacterial ribosomal protein bS6 family.

Its function is as follows. Binds together with bS18 to 16S ribosomal RNA. The protein is Small ribosomal subunit protein bS6 of Pseudomonas fluorescens (strain SBW25).